An 805-amino-acid polypeptide reads, in one-letter code: Kinesin-like protein Klp10A (805 aa).

The interval 1-274 (MDMITVGQSV…FVPLLDGQAV (274 aa)) is globular. Disordered stretches follow at residues 68–94 (QHAAPEPKKQATAPMNLSRNPTQSAIG) and 117–211 (IPNP…RRSH). The segment covering 80–94 (APMNLSRNPTQSAIG) has biased composition (polar residues). The span at 123–136 (SSNSVNTNSNSNTT) shows a compositional bias: low complexity. A Phosphoserine modification is found at S157. Polar residues predominate over residues 158–179 (QAATGQQQTRIASAVPNNTLPN). Over residues 180-200 (PSAAASAGPAAQGVATAATTQ) the composition is skewed to low complexity. Residues 205-244 (ASTRRSHALKEVERLKENREKRRARQAEMKEEKVALMNQD) adopt a coiled-coil conformation. Residues 278-610 (QITVCVRKRP…LRYADRVKEL (333 aa)) form the Kinesin motor domain. 368-375 (GQTGSGKT) contacts ATP. Phosphothreonine is present on T630. A disordered region spans residues 633–688 (EEEEELNMVHPHSHQLHPNSHAPASQSNNQRAPASHHSGAVIHNNNNNNNKNGNAG). Residues 648–664 (LHPNSHAPASQSNNQRA) are compositionally biased toward polar residues. Residues 676 to 688 (NNNNNNNKNGNAG) show a composition bias toward low complexity. A phosphoserine mark is found at S795, S797, and S800.

Belongs to the TRAFAC class myosin-kinesin ATPase superfamily. Kinesin family. MCAK/KIF2 subfamily. In terms of assembly, interacts with Alms1a (via C-terminus). As to expression, expressed in male germline stem cells and spermatogonia (at protein level).

The protein resides in the cytoplasm. It is found in the cytoskeleton. Its subcellular location is the microtubule organizing center. It localises to the centrosome. The protein localises to the spindle pole. The protein resides in the chromosome. It is found in the centromere. In terms of biological role, required during anaphase to drive sister chromatid separation to promote flux by actively depolymerizing kinetochore microtubules at their pole-associated minus ends, thereby moving chromatids through a 'poleward flux'. Involved in asymmetric cell division of sensory organ precursor (SOP) cells by playing a role in the asymmetric localization of Sara-expressing endosomes to the pIIa daughter cell but not to the pIIb cell. Klp98A targets Sara-expressing endosomes to the central spindle which is symmetrically arranged in early cell division. During late cytokinesis, central spindle asymmetry is generated by enrichment of Patronin on the pIIb side which protects microtubules from depolymerization by Klp10A while unprotected microtubules on the pIIa side are disassembled by Klp10A, leading to the asymmetric delivery of Sara-expressing endosomes to the pIIa daughter cell. This Drosophila melanogaster (Fruit fly) protein is Kinesin-like protein Klp10A.